We begin with the raw amino-acid sequence, 359 residues long: Fructose-like permease IIC component 2 (359 aa).

One can recognise a PTS EIIC type-2 domain in the interval 11–344 (TRQHLMTGVS…KSLARKNGSS (334 aa)). 9 consecutive transmembrane segments (helical) span residues 19-39 (VSHM…SVML), 60-80 (IGVA…GYSI), 99-119 (FGAG…VVHY), 135-155 (IFII…WGLG), 176-196 (SIVM…GGPV), 216-236 (VAIA…ATLI), 251-271 (AALV…AAAD), 290-310 (AALV…LPVV), and 314-334 (LGYI…VNVL).

Its subcellular location is the cell inner membrane. In terms of biological role, the phosphoenolpyruvate-dependent sugar phosphotransferase system (PTS), a major carbohydrate active -transport system, catalyzes the phosphorylation of incoming sugar substrates concomitant with their translocation across the cell membrane. This is Fructose-like permease IIC component 2 (frwC) from Escherichia coli (strain K12).